Reading from the N-terminus, the 476-residue chain is MLILLLHAVVFSLPYTRATEACLRACPAACTCSHVERGCSVRCDRAGLQRVPQEFPCEAASIDLDRNGLRILGERAFGTLPSLRRLSLRHNNLSFITPGAFKGLPRLAELRLAHNGELRYLHVRTFAALGRLRRLDLAACRLFSVPERLLAELPALRELTAFDNLFRRVPGALRGLANLTHAHFERSRIEAVASGSLLGMRRLRSLSLQANRVRAVHAGAFGDCGALEDLLLNDNLLATLPAAAFRGLRRLRTLNLGGNALGSVARAWFSDLAELELLYLDRNSITFVEEGAFQNLSGLLALHLNGNRLTVLSWAAFQPGFFLGRLFLFRNPWRCDCQLEWLRDWMEGSGRVADVACASPGSVAGQDLSQVVFERSSDGLCVDPDELNFTTSSPGPSPEPVATTVSRFSSLLSKLLAPRAPVEEVANTTWELVNVSLNDSFRSHAVMVFCYKATFLFTSCVLLSLAQYVVVGLQRE.

Residues 1–18 (MLILLLHAVVFSLPYTRA) form the signal peptide. An LRRNT domain is found at 19-57 (TEACLRACPAACTCSHVERGCSVRCDRAGLQRVPQEFPC). LRR repeat units follow at residues 58-79 (EAASIDLDRNGLRILGERAFGT), 82-103 (SLRRLSLRHNNLSFITPGAFKG), 106-128 (RLAELRLAHNGELRYLHVRTFAA), 131-154 (RLRRLDLAACRLFSVPERLLAELP), 155-177 (ALRELTAFDNLFRRVPGALRGLA), 178-199 (NLTHAHFERSRIEAVASGSLLG), 202-223 (RLRSLSLQANRVRAVHAGAFGD), 226-247 (ALEDLLLNDNLLATLPAAAFRG), 250-271 (RLRTLNLGGNALGSVARAWFSD), 274-295 (ELELLYLDRNSITFVEEGAFQN), and 298-319 (GLLALHLNGNRLTVLSWAAFQP). The N-linked (GlcNAc...) asparagine glycan is linked to Asn-92. Asn-178 carries an N-linked (GlcNAc...) asparagine glycan. An N-linked (GlcNAc...) asparagine glycan is attached at Asn-295. In terms of domain architecture, LRRCT spans 331 to 383 (NPWRCDCQLEWLRDWMEGSGRVADVACASPGSVAGQDLSQVVFERSSDGLCVD). 4 N-linked (GlcNAc...) asparagine glycosylation sites follow: Asn-388, Asn-427, Asn-434, and Asn-438.

This sequence belongs to the small leucine-rich proteoglycan (SLRP) family. SLRP class IV subfamily. Expressed abundantly in retina with lower levels in brain, lung, spleen and testis. Not detected in kidney, heart or liver. In the retina, highest expression found in the inner nuclear layer and ganglion cell layer.

Its subcellular location is the secreted. It localises to the extracellular space. The protein resides in the extracellular matrix. This Mus musculus (Mouse) protein is Nyctalopin (Nyx).